We begin with the raw amino-acid sequence, 353 residues long: Photosystem II protein D1 (353 aa).

Thr2 is subject to N-acetylthreonine. A Phosphothreonine modification is found at Thr2. Helical transmembrane passes span 29 to 46, 118 to 133, and 142 to 156; these read YIGW…TATS, HFLL…EWEL, and WIVV…AATA. His118 lines the chlorophyll a pocket. Residue Tyr126 coordinates pheophytin a. Residues Asp170 and Glu189 each coordinate [CaMn4O5] cluster. Residues 197–218 form a helical membrane-spanning segment; that stretch reads FHMLGVAGVFGGSLFSAMHGSL. His198 contributes to the chlorophyll a binding site. A quinone-binding positions include His215 and 264–265; that span reads SF. A Fe cation-binding site is contributed by His215. Residue His272 participates in Fe cation binding. The chain crosses the membrane as a helical span at residues 274 to 288; the sequence is FLAAWPVVGIWFTAL. The [CaMn4O5] cluster site is built by His332, Glu333, Asp342, and Ala344. A propeptide spanning residues 345 to 353 is cleaved from the precursor; the sequence is AVDAPSISG.

Belongs to the reaction center PufL/M/PsbA/D family. In terms of assembly, PSII is composed of 1 copy each of membrane proteins PsbA, PsbB, PsbC, PsbD, PsbE, PsbF, PsbH, PsbI, PsbJ, PsbK, PsbL, PsbM, PsbT, PsbX, PsbY, PsbZ, Psb30/Ycf12, at least 3 peripheral proteins of the oxygen-evolving complex and a large number of cofactors. It forms dimeric complexes. The D1/D2 heterodimer binds P680, chlorophylls that are the primary electron donor of PSII, and subsequent electron acceptors. It shares a non-heme iron and each subunit binds pheophytin, quinone, additional chlorophylls, carotenoids and lipids. D1 provides most of the ligands for the Mn4-Ca-O5 cluster of the oxygen-evolving complex (OEC). There is also a Cl(-1) ion associated with D1 and D2, which is required for oxygen evolution. The PSII complex binds additional chlorophylls, carotenoids and specific lipids. serves as cofactor. Tyr-161 forms a radical intermediate that is referred to as redox-active TyrZ, YZ or Y-Z. Post-translationally, C-terminally processed by CTPA; processing is essential to allow assembly of the oxygen-evolving complex and thus photosynthetic growth.

It is found in the plastid. The protein resides in the chloroplast thylakoid membrane. The catalysed reaction is 2 a plastoquinone + 4 hnu + 2 H2O = 2 a plastoquinol + O2. In terms of biological role, photosystem II (PSII) is a light-driven water:plastoquinone oxidoreductase that uses light energy to abstract electrons from H(2)O, generating O(2) and a proton gradient subsequently used for ATP formation. It consists of a core antenna complex that captures photons, and an electron transfer chain that converts photonic excitation into a charge separation. The D1/D2 (PsbA/PsbD) reaction center heterodimer binds P680, the primary electron donor of PSII as well as several subsequent electron acceptors. This Vicia faba (Broad bean) protein is Photosystem II protein D1.